A 457-amino-acid polypeptide reads, in one-letter code: UDP-N-acetylmuramate--L-alanine ligase (457 aa).

Residue 118-124 (GTHGKTT) participates in ATP binding.

The protein belongs to the MurCDEF family.

Its subcellular location is the cytoplasm. It carries out the reaction UDP-N-acetyl-alpha-D-muramate + L-alanine + ATP = UDP-N-acetyl-alpha-D-muramoyl-L-alanine + ADP + phosphate + H(+). It participates in cell wall biogenesis; peptidoglycan biosynthesis. Functionally, cell wall formation. This chain is UDP-N-acetylmuramate--L-alanine ligase, found in Clostridium perfringens (strain 13 / Type A).